The sequence spans 185 residues: Ribosome-recycling factor (185 aa).

This sequence belongs to the RRF family.

It localises to the cytoplasm. Its function is as follows. Responsible for the release of ribosomes from messenger RNA at the termination of protein biosynthesis. May increase the efficiency of translation by recycling ribosomes from one round of translation to another. This is Ribosome-recycling factor from Syntrophobacter fumaroxidans (strain DSM 10017 / MPOB).